A 445-amino-acid polypeptide reads, in one-letter code: Tyrosine--tRNA ligase, mitochondrial (445 aa).

Y33 lines the L-tyrosine pocket. Position 37 (D37) interacts with ATP. A 'HIGH' region motif is present at residues P38–N47. Residues D77, Y184, Q188, D191, and Q210 each coordinate L-tyrosine. Residues K245–S249 carry the 'KMSKS' region motif. Residue K248 participates in ATP binding. Positions Q384–L445 constitute an S4 RNA-binding domain.

Belongs to the class-I aminoacyl-tRNA synthetase family. In terms of assembly, homodimer.

Its subcellular location is the mitochondrion matrix. It carries out the reaction tRNA(Tyr) + L-tyrosine + ATP = L-tyrosyl-tRNA(Tyr) + AMP + diphosphate + H(+). Catalyzes the attachment of tyrosine to tRNA(Tyr) in a two-step reaction: tyrosine is first activated by ATP to form Tyr-AMP and then transferred to the acceptor end of tRNA(Tyr). This is Tyrosine--tRNA ligase, mitochondrial from Schizosaccharomyces pombe (strain 972 / ATCC 24843) (Fission yeast).